The sequence spans 742 residues: Photosystem I P700 chlorophyll a apoprotein A2 (742 aa).

8 helical membrane-spanning segments follow: residues 46–69 (LFST…FHIA), 135–158 (LFQA…LHLQ), 175–199 (LNHH…HVAI), 273–291 (IAHH…GHMY), 336–359 (LHFQ…QHMG), 375–401 (SALY…IFFV), 423–445 (ALIS…IYVH), and 525–543 (FLVH…LILI). [4Fe-4S] cluster-binding residues include C567 and C576. A run of 2 helical transmembrane segments spans residues 583–604 (AMYL…YWHW) and 651–673 (LSVW…MFLI). H662, M670, and Y678 together coordinate divinyl chlorophyll a. A phylloquinone-binding site is contributed by W679. A helical transmembrane segment spans residues 715-735 (LVGLAHFTIGNILTFGAFVIA).

The protein belongs to the PsaA/PsaB family. In terms of assembly, the PsaA/B heterodimer binds the P700 divinyl chlorophyll special pair and subsequent electron acceptors. PSI consists of a core antenna complex that captures photons, and an electron transfer chain that converts photonic excitation into a charge separation. The cyanobacterial PSI reaction center is composed of one copy each of PsaA,B,C,D,E,F,I,J,K,L,M and X, and forms trimeric complexes. Requires PSI electron transfer chain: 5 divinyl chlorophyll a, 1 divinyl chlorophyll a', 2 phylloquinones and 3 4Fe-4S clusters. PSI core antenna: 90 divinyl chlorophyll a, 22 carotenoids, 3 phospholipids and 1 galactolipid. P700 is a divinyl chlorophyll a/divinyl chlorophyll a' dimer, A0 is one or more divinyl chlorophyll a, A1 is one or both phylloquinones and FX is a shared 4Fe-4S iron-sulfur center. as cofactor.

The protein resides in the cellular thylakoid membrane. The catalysed reaction is reduced [plastocyanin] + hnu + oxidized [2Fe-2S]-[ferredoxin] = oxidized [plastocyanin] + reduced [2Fe-2S]-[ferredoxin]. PsaA and PsaB bind P700, the primary electron donor of photosystem I (PSI), as well as the electron acceptors A0, A1 and FX. PSI is a plastocyanin/cytochrome c6-ferredoxin oxidoreductase, converting photonic excitation into a charge separation, which transfers an electron from the donor P700 chlorophyll pair to the spectroscopically characterized acceptors A0, A1, FX, FA and FB in turn. Oxidized P700 is reduced on the lumenal side of the thylakoid membrane by plastocyanin or cytochrome c6. The polypeptide is Photosystem I P700 chlorophyll a apoprotein A2 (Prochlorococcus marinus subsp. pastoris (strain CCMP1986 / NIES-2087 / MED4)).